Here is a 479-residue protein sequence, read N- to C-terminus: Spindly-like protein spdl-1 (479 aa).

Coiled coils occupy residues D4 to L180, E210 to V250, and L321 to H357.

In terms of assembly, interacts with Zwilch homolog zwl-1, a component of the RZZ complex. Interacts with mdf-1 and mdf-2.

It localises to the chromosome. The protein localises to the centromere. It is found in the kinetochore. Its subcellular location is the cytoplasm. The protein resides in the cytoskeleton. It localises to the spindle pole. Transient kinetochore component required for chromosome and spindle pole alignment and chromosome segregation during mitosis. Functions downstream of the RZZ complex to mediate kinetochore-microtubule attachments and nuclear envelope breakdown during cell division. Required for kinetochore assembly and localizes the checkpoint proteins mdf-1 and mdf-2, dynein and dynactin to unattached kinetochores. Dynein is believed to control the initial lateral interaction between the kinetochore and spindle microtubules and to facilitate the subsequent formation of end-on kinetochore-microtubule attachments mediated by the NDC80 complex. Required for embryonic development. The polypeptide is Spindly-like protein spdl-1 (Caenorhabditis elegans).